Reading from the N-terminus, the 193-residue chain is Holliday junction branch migration complex subunit RuvA (193 aa).

Residues 1–64 (MITSLTGTIL…EDAHLLYGFM (64 aa)) form a domain I region. The segment at 65 to 139 (TVAERDMFRL…DKMGGIAPGP (75 aa)) is domain II. The interval 139 to 143 (PMGRG) is flexible linker. The tract at residues 144–193 (GAGDPRQEAIAALLTLGYKPAQASQAIAGLADGLGLEDLIRQSLQNLSRH) is domain III.

It belongs to the RuvA family. As to quaternary structure, homotetramer. Forms an RuvA(8)-RuvB(12)-Holliday junction (HJ) complex. HJ DNA is sandwiched between 2 RuvA tetramers; dsDNA enters through RuvA and exits via RuvB. An RuvB hexamer assembles on each DNA strand where it exits the tetramer. Each RuvB hexamer is contacted by two RuvA subunits (via domain III) on 2 adjacent RuvB subunits; this complex drives branch migration. In the full resolvosome a probable DNA-RuvA(4)-RuvB(12)-RuvC(2) complex forms which resolves the HJ.

Its subcellular location is the cytoplasm. In terms of biological role, the RuvA-RuvB-RuvC complex processes Holliday junction (HJ) DNA during genetic recombination and DNA repair, while the RuvA-RuvB complex plays an important role in the rescue of blocked DNA replication forks via replication fork reversal (RFR). RuvA specifically binds to HJ cruciform DNA, conferring on it an open structure. The RuvB hexamer acts as an ATP-dependent pump, pulling dsDNA into and through the RuvAB complex. HJ branch migration allows RuvC to scan DNA until it finds its consensus sequence, where it cleaves and resolves the cruciform DNA. The protein is Holliday junction branch migration complex subunit RuvA of Acidithiobacillus ferrooxidans (strain ATCC 53993 / BNL-5-31) (Leptospirillum ferrooxidans (ATCC 53993)).